The primary structure comprises 841 residues: ATP-dependent helicase Lhr-Core (841 aa).

The ATP site is built by Gln39, Lys62, Thr63, Asp181, Glu182, Ile352, Arg369, and His372. Positions 43–234 constitute a Helicase ATP-binding domain; that stretch reads IKEIHEGKNV…FLVGNGRDCY (192 aa). The short motif at 181–184 is the DEVH box element; the sequence is DEIH. Residues 266-416 enclose the Helicase C-terminal domain; it reads RLYNLLKKLI…RIHIPKNCLD (151 aa). The interval 417–500 is WH domain; sequence VLAQHLVGMA…IYYMNVGTIP (84 aa). The segment at 501-841 is domain 4; sequence DETAVDVIAD…MEFISMKGKK (341 aa).

The protein belongs to the Lhr helicase family. Lhr-Core subfamily. As to quaternary structure, monomer.

The catalysed reaction is Couples ATP hydrolysis with the unwinding of duplex DNA by translocating in the 3'-5' direction.. The enzyme catalyses ATP + H2O = ADP + phosphate + H(+). Its function is as follows. DNA helicase that loads on single-stranded (ss)DNA and translocates in a 3'-5' direction, probably involved in DNA repair. Archaeal orthologs have double-stranded (ds)DNA and/or RNA:DNA helicase activity. The sequence is that of ATP-dependent helicase Lhr-Core from Methanocaldococcus jannaschii (strain ATCC 43067 / DSM 2661 / JAL-1 / JCM 10045 / NBRC 100440) (Methanococcus jannaschii).